The chain runs to 759 residues: Tripartite motif-containing protein 46 (759 aa).

Positions 1-166 (MAEGEDMQTF…VERYRQSVSV (166 aa)) are required for proximal axon localization, axon formation and migration. The RING-type 1; degenerate zinc-finger motif lies at 33–59 (CPVCQEMYKQPLVLPCTHNVCQACARE). Residues 67–98 (IGHGGDPSSEPTSPASTPSTRSPRLSRRTLPK) are disordered. Positions 73 to 89 (PSSEPTSPASTPSTRSP) are enriched in low complexity. Residues 172–231 (CQLCKPPPLEATKGCTECRATFCNECFKLFHPWGTQKAQHEPTLPTLSFRPKGLMCPDHK) form an RING-type 2; degenerate zinc finger. A B box-type zinc finger spans residues 222 to 263 (PKGLMCPDHKEEVTHYCKTCQRLVCQLCRVRRTHSGHKITPV). Zn(2+) is bound by residues Cys227, His230, Cys249, and His255. A coiled-coil region spans residues 322–400 (AVLEEKRASL…RATEALQTFR (79 aa)). A Phosphoserine modification is found at Ser330. In terms of domain architecture, COS spans 370-427 (LKETDQPCFVQAAKQLHNRIARATEALQTFRPAASSSFRHCQLDVGREMKLLTELSFL). A required for microtubule association, proximal axon localization and axon formation region spans residues 411–429 (QLDVGREMKLLTELSFLRV). The Fibronectin type-III domain occupies 429–528 (VPEAPVIDTQ…EDVHLHTPPA (100 aa)). The B30.2/SPRY domain occupies 526–747 (PPAPVLHFFL…LQEPVGTKPE (222 aa)). At Ser627 the chain carries Phosphoserine.

The protein belongs to the TRIM/RBCC family. As to quaternary structure, interacts with TUBB3 and TUBA4A. In terms of tissue distribution, expressed in the central nervous system, including pyramidal neurons and interneurons in the cortex and hippocampus and all neuronal cell types in the cerebral and cerebellar cortex, and in the peripheral nervous system, including the dorsal root ganglion neurons.

Its subcellular location is the cell projection. It localises to the axon. It is found in the cytoplasm. The protein resides in the cytoskeleton. Its function is as follows. Microtubule-associated protein that is involved in the formation of parallel microtubule bundles linked by cross-bridges in the proximal axon. Required for the uniform orientation and maintenance of the parallel microtubule fascicles, which are important for efficient cargo delivery and trafficking in axons. Thereby also required for proper axon formation, the establishment of neuronal polarity and proper neuronal migration. The chain is Tripartite motif-containing protein 46 (Trim46) from Mus musculus (Mouse).